The primary structure comprises 114 residues: Ribonuclease P protein component (114 aa).

The protein belongs to the RnpA family. In terms of assembly, consists of a catalytic RNA component (M1 or rnpB) and a protein subunit.

It catalyses the reaction Endonucleolytic cleavage of RNA, removing 5'-extranucleotides from tRNA precursor.. In terms of biological role, RNaseP catalyzes the removal of the 5'-leader sequence from pre-tRNA to produce the mature 5'-terminus. It can also cleave other RNA substrates such as 4.5S RNA. The protein component plays an auxiliary but essential role in vivo by binding to the 5'-leader sequence and broadening the substrate specificity of the ribozyme. The sequence is that of Ribonuclease P protein component from Exiguobacterium sp. (strain ATCC BAA-1283 / AT1b).